Here is a 214-residue protein sequence, read N- to C-terminus: Coiled-coil domain-containing protein 169 (214 aa).

Residues 30 to 144 (EMLQMSTFEL…IEQEAKAYYK (115 aa)) are a coiled coil. The interval 161-214 (VTQEAAKKQQSDPAHATREKPAFKAKYNGLAKRRTMTKRRGGMTKGSHPSNMKH) is disordered. The segment covering 165–182 (AAKKQQSDPAHATREKPA) has biased composition (basic and acidic residues). The segment covering 191–202 (AKRRTMTKRRGG) has biased composition (basic residues).

The protein belongs to the CCDC169 family.

The protein is Coiled-coil domain-containing protein 169 (ccdc169) of Xenopus laevis (African clawed frog).